We begin with the raw amino-acid sequence, 438 residues long: Serine/threonine exchanger SteT (438 aa).

The Cytoplasmic portion of the chain corresponds to 1–11; the sequence is MHTEDNGLKKE. A helical membrane pass occupies residues 12–32; sequence IGLLFALTLVIGTIIGSGVFM. Over 33-45 the chain is Extracellular; that stretch reads KPGAVLAYSGDSK. Residues 46 to 66 traverse the membrane as a helical segment; it reads MALFAWLLGGILTLAGGLTIA. Residues 67–98 are Cytoplasmic-facing; the sequence is EIGTQIPKTGGLYTYLEEVYGEFWGFLCGWVQ. Residues 99–119 form a helical membrane-spanning segment; it reads IIIYGPAIIGALGLYFGSLMA. Residues 120-126 lie on the Extracellular side of the membrane; it reads NLFGWGS. A helical membrane pass occupies residues 127 to 147; sequence GLSKVIGIIAVLFLCVINIIG. The Cytoplasmic segment spans residues 148-151; sequence TKYG. Residues 152–172 form a helical membrane-spanning segment; that stretch reads GFVQTLTTIGKLIPIACIIVF. At 173-193 the chain is on the extracellular side; that stretch reads GLWKGDQHIFTAVNESISDMN. Residues 194-214 form a helical membrane-spanning segment; that stretch reads FGAAILATLFAYDGWILLAAL. At 215-230 the chain is on the cytoplasmic side; sequence GGEMKNPEKLLPRAMT. The chain crosses the membrane as a helical span at residues 231-251; that stretch reads GGLLIVTAIYIFINFALLHIL. Residues 252–269 are Extracellular-facing; the sequence is SANEIVTLGENATSTAAT. The chain crosses the membrane as a helical span at residues 270-290; that stretch reads MLFGSIGGKLISVGIIVSIFG. Residues 291–327 lie on the Cytoplasmic side of the membrane; that stretch reads CLNGKVLSFPRVSFAMAERKQLPFAEKLSHVHPSFRT. A helical transmembrane segment spans residues 328–348; that stretch reads PWIAISFQIALALIMMLISNP. The Extracellular segment spans residues 349–352; that stretch reads DKLS. A helical transmembrane segment spans residues 353 to 373; sequence EISIFMIYIFYVMAFFAVFIL. Over 374–388 the chain is Cytoplasmic; sequence RKRAKGEKRAYSVPL. The helical transmembrane segment at 389–409 threads the bilayer; sequence YPFMPILAIAGSFFVLGSTLI. At 410-411 the chain is on the extracellular side; it reads TD. Residues 412–432 form a helical membrane-spanning segment; it reads TMSCGLSILIGLAGLPVYYGM. The Cytoplasmic segment spans residues 433 to 438; that stretch reads KKRKAS.

This sequence belongs to the amino acid-polyamine-organocation (APC) superfamily. L-type amino acid transporter (LAT) (TC 2.A.3.8) family. In terms of assembly, monomer.

The protein localises to the cell membrane. Exhibits an obligate exchange activity for serine, threonine and aromatic amino acids. The sequence is that of Serine/threonine exchanger SteT (steT) from Bacillus subtilis (strain 168).